The primary structure comprises 124 residues: MPTIQQLVRKGRRDKVAKVKTAALKGSPQRRGVCTRVYTTTPKKPNSALRKVARVKLTSQVEVTAYIPGEGHNLQEHSMVLVRGGRVKDLPGVRYKIIRGSLDTQGVKNRKQARSRYGAKKEKS.

The interval 1-30 is disordered; sequence MPTIQQLVRKGRRDKVAKVKTAALKGSPQR. Aspartate 89 is modified (3-methylthioaspartic acid). The tract at residues 105-124 is disordered; the sequence is QGVKNRKQARSRYGAKKEKS. Over residues 108–118 the composition is skewed to basic residues; it reads KNRKQARSRYG.

Belongs to the universal ribosomal protein uS12 family. As to quaternary structure, part of the 30S ribosomal subunit. Contacts proteins S8 and S17. May interact with IF1 in the 30S initiation complex.

Its function is as follows. With S4 and S5 plays an important role in translational accuracy. Functionally, interacts with and stabilizes bases of the 16S rRNA that are involved in tRNA selection in the A site and with the mRNA backbone. Located at the interface of the 30S and 50S subunits, it traverses the body of the 30S subunit contacting proteins on the other side and probably holding the rRNA structure together. The combined cluster of proteins S8, S12 and S17 appears to hold together the shoulder and platform of the 30S subunit. The sequence is that of Small ribosomal subunit protein uS12 from Mycobacterium intracellulare.